The primary structure comprises 575 residues: Lysine--tRNA ligase (575 aa).

Residues glutamate 412 and glutamate 419 each coordinate Mg(2+).

Belongs to the class-II aminoacyl-tRNA synthetase family. Homodimer. Requires Mg(2+) as cofactor.

The protein localises to the cytoplasm. It catalyses the reaction tRNA(Lys) + L-lysine + ATP = L-lysyl-tRNA(Lys) + AMP + diphosphate. The protein is Lysine--tRNA ligase of Bacteroides fragilis (strain ATCC 25285 / DSM 2151 / CCUG 4856 / JCM 11019 / LMG 10263 / NCTC 9343 / Onslow / VPI 2553 / EN-2).